The chain runs to 312 residues: UDP-N-acetylenolpyruvoylglucosamine reductase (312 aa).

The region spanning 24–206 is the FAD-binding PCMH-type domain; it reads GIGGPADLFA…SADILKVRNE (183 aa). Arg166 is an active-site residue. The active-site Proton donor is the Ser217. The active site involves Glu307.

It belongs to the MurB family. Requires FAD as cofactor.

Its subcellular location is the cytoplasm. It carries out the reaction UDP-N-acetyl-alpha-D-muramate + NADP(+) = UDP-N-acetyl-3-O-(1-carboxyvinyl)-alpha-D-glucosamine + NADPH + H(+). It participates in cell wall biogenesis; peptidoglycan biosynthesis. In terms of biological role, cell wall formation. The chain is UDP-N-acetylenolpyruvoylglucosamine reductase from Solibacter usitatus (strain Ellin6076).